The following is a 552-amino-acid chain: uncharacterized protein (552 aa).

Positions K8–K200 constitute a DhaL domain.

This is an uncharacterized protein from Staphylococcus saprophyticus subsp. saprophyticus (strain ATCC 15305 / DSM 20229 / NCIMB 8711 / NCTC 7292 / S-41).